The sequence spans 177 residues: Large ribosomal subunit protein uL6 (177 aa).

It belongs to the universal ribosomal protein uL6 family. Part of the 50S ribosomal subunit.

Functionally, this protein binds to the 23S rRNA, and is important in its secondary structure. It is located near the subunit interface in the base of the L7/L12 stalk, and near the tRNA binding site of the peptidyltransferase center. This chain is Large ribosomal subunit protein uL6, found in Mesorhizobium japonicum (strain LMG 29417 / CECT 9101 / MAFF 303099) (Mesorhizobium loti (strain MAFF 303099)).